Here is a 909-residue protein sequence, read N- to C-terminus: Coatomer subunit beta'-3 (909 aa).

WD repeat units follow at residues 13–52 (QRSE…ITKS), 55–94 (VTEL…KVKV), 97–136 (AHSD…ACTQ), 140–180 (GHSH…PNFT), 183–224 (AHQK…CVQT), 227–266 (GHTH…LENT), 269–309 (YGLE…ASMD), 351–390 (TCDL…RSFG), and 461–501 (QIDV…SHFD). Residues 862 to 909 (EENGHVENEGDEEEQQEEEVNEEEGVVDADSTDGAVLVNGSEVLTPHP) are disordered. Over residues 870-892 (EGDEEEQQEEEVNEEEGVVDADS) the composition is skewed to acidic residues.

Belongs to the WD repeat COPB2 family. As to quaternary structure, oligomeric complex that consists of at least the alpha, beta, beta', gamma, delta, epsilon and zeta subunits.

It is found in the cytoplasm. Its subcellular location is the golgi apparatus membrane. The protein localises to the cytoplasmic vesicle. The protein resides in the COPI-coated vesicle membrane. Its function is as follows. The coatomer is a cytosolic protein complex that binds to dilysine motifs and reversibly associates with Golgi non-clathrin-coated vesicles, which further mediate biosynthetic protein transport from the ER, via the Golgi up to the trans Golgi network. Coatomer complex is required for budding from Golgi membranes, and is essential for the retrograde Golgi-to-ER transport of dilysine-tagged proteins. This is Coatomer subunit beta'-3 from Arabidopsis thaliana (Mouse-ear cress).